A 385-amino-acid chain; its full sequence is 8-amino-7-oxononanoate synthase (385 aa).

Substrate is bound at residue Arg27. 105–106 (GY) lines the pyridoxal 5'-phosphate pocket. Residue His130 coordinates substrate. Residues Ser176, 201–204 (DEAH), and 232–235 (TMSK) each bind pyridoxal 5'-phosphate. Lys235 carries the N6-(pyridoxal phosphate)lysine modification. Thr345 is a substrate binding site.

Belongs to the class-II pyridoxal-phosphate-dependent aminotransferase family. BioF subfamily. In terms of assembly, homodimer. Requires pyridoxal 5'-phosphate as cofactor.

It carries out the reaction 6-carboxyhexanoyl-[ACP] + L-alanine + H(+) = (8S)-8-amino-7-oxononanoate + holo-[ACP] + CO2. It participates in cofactor biosynthesis; biotin biosynthesis. In terms of biological role, catalyzes the decarboxylative condensation of pimeloyl-[acyl-carrier protein] and L-alanine to produce 8-amino-7-oxononanoate (AON), [acyl-carrier protein], and carbon dioxide. The polypeptide is 8-amino-7-oxononanoate synthase (Mycobacterium leprae (strain Br4923)).